We begin with the raw amino-acid sequence, 140 residues long: Phosphoribosyl-AMP cyclohydrolase (140 aa).

Asp85 contacts Mg(2+). Zn(2+) is bound at residue Cys86. Residues Asp87 and Asp89 each coordinate Mg(2+). Residues Cys102 and Cys109 each contribute to the Zn(2+) site.

It belongs to the PRA-CH family. As to quaternary structure, homodimer. It depends on Mg(2+) as a cofactor. Zn(2+) is required as a cofactor.

The protein resides in the cytoplasm. The enzyme catalyses 1-(5-phospho-beta-D-ribosyl)-5'-AMP + H2O = 1-(5-phospho-beta-D-ribosyl)-5-[(5-phospho-beta-D-ribosylamino)methylideneamino]imidazole-4-carboxamide. Its pathway is amino-acid biosynthesis; L-histidine biosynthesis; L-histidine from 5-phospho-alpha-D-ribose 1-diphosphate: step 3/9. Its function is as follows. Catalyzes the hydrolysis of the adenine ring of phosphoribosyl-AMP. The protein is Phosphoribosyl-AMP cyclohydrolase of Bradyrhizobium diazoefficiens (strain JCM 10833 / BCRC 13528 / IAM 13628 / NBRC 14792 / USDA 110).